Reading from the N-terminus, the 262-residue chain is Thiazole synthase (262 aa).

Lysine 104 (schiff-base intermediate with DXP) is an active-site residue. 1-deoxy-D-xylulose 5-phosphate-binding positions include glycine 165, 191–192 (AG), and 213–214 (NT).

It belongs to the ThiG family. In terms of assembly, homotetramer. Forms heterodimers with either ThiH or ThiS.

The protein resides in the cytoplasm. It carries out the reaction [ThiS sulfur-carrier protein]-C-terminal-Gly-aminoethanethioate + 2-iminoacetate + 1-deoxy-D-xylulose 5-phosphate = [ThiS sulfur-carrier protein]-C-terminal Gly-Gly + 2-[(2R,5Z)-2-carboxy-4-methylthiazol-5(2H)-ylidene]ethyl phosphate + 2 H2O + H(+). The protein operates within cofactor biosynthesis; thiamine diphosphate biosynthesis. Catalyzes the rearrangement of 1-deoxy-D-xylulose 5-phosphate (DXP) to produce the thiazole phosphate moiety of thiamine. Sulfur is provided by the thiocarboxylate moiety of the carrier protein ThiS. In vitro, sulfur can be provided by H(2)S. This chain is Thiazole synthase, found in Nitrosococcus oceani (strain ATCC 19707 / BCRC 17464 / JCM 30415 / NCIMB 11848 / C-107).